A 354-amino-acid chain; its full sequence is Ferrochelatase (354 aa).

The Fe cation site is built by His-214 and Glu-295.

The protein belongs to the ferrochelatase family.

It is found in the cytoplasm. It carries out the reaction heme b + 2 H(+) = protoporphyrin IX + Fe(2+). Its pathway is porphyrin-containing compound metabolism; protoheme biosynthesis; protoheme from protoporphyrin-IX: step 1/1. In terms of biological role, catalyzes the ferrous insertion into protoporphyrin IX. The protein is Ferrochelatase of Burkholderia orbicola (strain AU 1054).